The following is a 113-amino-acid chain: Large ribosomal subunit protein eL31 (113 aa).

Belongs to the eukaryotic ribosomal protein eL31 family.

The protein is Large ribosomal subunit protein eL31 (RPL31) of Candida glabrata (strain ATCC 2001 / BCRC 20586 / JCM 3761 / NBRC 0622 / NRRL Y-65 / CBS 138) (Yeast).